Consider the following 45-residue polypeptide: Psychimicin (45 aa).

Cystine bridges form between Cys-10/Cys-24, Cys-14/Cys-36, and Cys-25/Cys-42.

Monomer. Hemolymph.

It is found in the secreted. Has antimicrobial activity. Is particularly active against fungi, and to a lesser extent against Gram-positive and Gram-negative bacteria. This Oiketicus kirbyi (Bagworm moth) protein is Psychimicin.